Consider the following 134-residue polypeptide: Antifungal protein ginkbilobin-2 (134 aa).

A signal peptide spans 1 to 26 (MKTMRMNSAFILAFALAAAMLILTEA). One can recognise a Gnk2-homologous domain in the interval 29–134 (TAFVSSACNT…CFIQYEQRSF (106 aa)). 3 cysteine pairs are disulfide-bonded: C36–C112, C88–C97, and C100–C125. N37 is an alpha-D-mannopyranose binding site. Residues R119 and E130 each coordinate alpha-D-mannopyranose.

Binds actin in vitro.

The protein resides in the secreted. In terms of biological role, possesses antifungal activity against F.oxysporum, T.reesei and C.albicans. Weakly inhibits the aspartic acid protease pepsin activity. Exerts antifungal activity against S.cerevisiae and F.culmorum through its carbohydrate-binding specificity. Acts as a lectin that stricly recognizes alpha-1,2-linked mannose moieties and interacts with the yeast cell wall mannan polysaccharide. Can interfere with the fungal actin remodeling resulting to the activation of an actin-dependent cell death. This chain is Antifungal protein ginkbilobin-2, found in Ginkgo biloba (Ginkgo).